The primary structure comprises 140 residues: MPRPIRCRRVEFLPRFNYFSPREGSNDEVQLKVEELEAIRLKDLEGLMQEECAQKMQVSRQTFQLILEEARKKVADALVNGKAIRIEGGNYVFGNCKYTCLNCGKVFELDKDECPECHSSQVVCHRGKGRGHCFRHHRGW.

The protein belongs to the UPF0251 family.

The protein is UPF0251 protein Athe_2281 of Caldicellulosiruptor bescii (strain ATCC BAA-1888 / DSM 6725 / KCTC 15123 / Z-1320) (Anaerocellum thermophilum).